A 363-amino-acid polypeptide reads, in one-letter code: Spore germination protein YndE (363 aa).

Helical transmembrane passes span 8–28, 41–61, 84–104, 113–133, 149–169, 189–209, 218–238, 273–293, 305–325, and 335–355; these read ITTAQATIIIINYMLAAGVLT, DGWISVLLGGVLAVIAGMIIA, LGHLISIVFITYFLALGAFEV, FFLLEGTPSWAIIMTVLWIGL, MIFPITVIIFLTIALMSLGIF, VKTTNLSFTCSEIMFILVAFM, AVVIGTGVVTSFYMITMIMVI, FLLVIWIMQLFATFIITFYAA, PLSCMFGLLPVIYILSCMPKN, and TVSHIALYIFGALPILLLVIS.

Belongs to the amino acid-polyamine-organocation (APC) superfamily. Spore germination protein (SGP) (TC 2.A.3.9) family.

It localises to the cell membrane. In terms of biological role, involved in the germinative response to L-alanine. Could be an amino acid transporter. This Bacillus subtilis (strain 168) protein is Spore germination protein YndE (yndE).